A 257-amino-acid polypeptide reads, in one-letter code: tRNA (cytidine/uridine/adenosine-2'-O-)-methyltransferase TrmJ (257 aa).

S-adenosyl-L-methionine is bound by residues 79-82 (TSAR), 115-117 (GRE), Ile-135, and 142-144 (GSL).

The protein belongs to the class IV-like SAM-binding methyltransferase superfamily. RNA methyltransferase TrmH family. As to quaternary structure, homodimer.

The protein resides in the cytoplasm. The catalysed reaction is cytidine(32) in tRNA + S-adenosyl-L-methionine = 2'-O-methylcytidine(32) in tRNA + S-adenosyl-L-homocysteine + H(+). The enzyme catalyses uridine(32) in tRNA + S-adenosyl-L-methionine = 2'-O-methyluridine(32) in tRNA + S-adenosyl-L-homocysteine + H(+). It catalyses the reaction adenosine(32) in tRNA + S-adenosyl-L-methionine = 2'-O-methyladenosine(32) in tRNA + S-adenosyl-L-homocysteine + H(+). Its function is as follows. Catalyzes the formation of 2'O-methylated cytidine (Cm32), 2'O-methylated uridine (Um32) or 2'O-methylated adenosine (Am32) at position 32 in tRNA. Confers resistance to oxidative stress. The chain is tRNA (cytidine/uridine/adenosine-2'-O-)-methyltransferase TrmJ from Pseudomonas aeruginosa (strain UCBPP-PA14).